Here is a 215-residue protein sequence, read N- to C-terminus: MKKITRIGIGGPVGSGKTAVIETITPRLIERGIKPLIITNDVVTTEDAKQVRRTLNGVLIEEKIVGVETGACPHTAVREDPSMNIAAVEELEDKYPDSDVILIESGGDNLTLTFSPALADFYIYVIDVAAGDKIPRKNGAGVCQSDILVINKRDLAPYVGASLEVMARDSKIMRGKKPFLFTNCKTGEGIDDLLRLILDMALFDVTTNRPLAASA.

GTP is bound at residue 11 to 18 (GPVGSGKT).

The protein belongs to the SIMIBI class G3E GTPase family. UreG subfamily. Homodimer. UreD, UreF and UreG form a complex that acts as a GTP-hydrolysis-dependent molecular chaperone, activating the urease apoprotein by helping to assemble the nickel containing metallocenter of UreC. The UreE protein probably delivers the nickel.

The protein resides in the cytoplasm. Facilitates the functional incorporation of the urease nickel metallocenter. This process requires GTP hydrolysis, probably effectuated by UreG. The chain is Urease accessory protein UreG 2 from Methylorubrum populi (strain ATCC BAA-705 / NCIMB 13946 / BJ001) (Methylobacterium populi).